Reading from the N-terminus, the 152-residue chain is Calmodulin-like protein 2 (152 aa).

4 EF-hand domains span residues 1–36, 37–72, 74–109, and 112–147; these read MDRGELSRVFQMFDKNGDGKIAKNELKDFFKSVGIM, VPENEINEMIAKMDVNGDGAMDIDEFGSLYQEMVEE, EEEEDMREAFRVFDQNGDGFITDEELRSVLASMGLK, and RTLEDCKKMISKVDVDGDGMVNFKEFKQMMRGGGFA. The Ca(2+) site is built by aspartate 14, asparagine 16, aspartate 18, lysine 20, glutamate 25, aspartate 50, asparagine 52, aspartate 54, glutamate 61, aspartate 87, asparagine 89, aspartate 91, glutamate 98, aspartate 125, aspartate 127, aspartate 129, methionine 131, and glutamate 136.

The protein belongs to the calmodulin family.

Functionally, potential calcium sensor that is required for pollen tube attraction for ovule fertilization. The protein is Calmodulin-like protein 2 (CML2) of Arabidopsis thaliana (Mouse-ear cress).